The sequence spans 362 residues: Apelin receptor A (362 aa).

The Extracellular segment spans residues 1–37 (METEGLSPMLYEDDYYYGNETGLQPCDETDWDFSYSL). The N-linked (GlcNAc...) asparagine glycan is linked to Asn-19. Cystine bridges form between Cys-26/Cys-286 and Cys-108/Cys-185. Residues 38-58 (LPVFYMIVFVLGLSGNGVVIF) traverse the membrane as a helical segment. At 59–76 (TVWKSKPKRRSADTYIGN) the chain is on the cytoplasmic side. The helical transmembrane segment at 77-97 (LALADLAFVVTLPLWATYTAL) threads the bilayer. Over 98–110 (GFHWPFGSALCKL) the chain is Extracellular. A helical membrane pass occupies residues 111–131 (SSYLVLLNMFASVFCLTCLSF). At 132–151 (DRYLAIVHSLSSAKLRSRSS) the chain is on the cytoplasmic side. A helical transmembrane segment spans residues 152–172 (IIVSLAVIWLFSGLLALPSLI). Over 173-199 (LRDTRVEGNNTICDLDFSGVSSKENEN) the chain is Extracellular. A glycan (N-linked (GlcNAc...) asparagine) is linked at Asn-181. A helical membrane pass occupies residues 200-220 (FWIGGLSILTTVPGFLLPLLL). At 221–248 (MTIFYCFIGGKVTMHFQNLKKEEQKKKR) the chain is on the cytoplasmic side. The helical transmembrane segment at 249 to 269 (LLKIIITLVVVFAICWLPFHI) threads the bilayer. Over 270-296 (LKTIHFLDLMGFLELSCSTQNIIVSLH) the chain is Extracellular. The helical transmembrane segment at 297-317 (PYATCLAYVNSCLNPFLYAFF) threads the bilayer. Over 318–362 (DLRFRSQCFFFFGFKKVLQGHLSNTSSSLSAQTQKSEIHSLATKV) the chain is Cytoplasmic.

This sequence belongs to the G-protein coupled receptor 1 family. As to expression, expressed in all blood vessels including the posterior cardinal vein, intersomitic veins and the vitelline vein network. At the gastrula stage, exclusively expressed in the mesodermal layer and at the neurula stage in the lateral plate mesoderm. Larval expression is observed in the endothelium of the primary blood vessels and the forming heart.

It is found in the cell membrane. G protein-coupled receptor for peptide hormones apelin (apln) and apelin receptor early endogenous ligand (apela), that plays a role in the regulation of normal cardiovascular function and fluid homeostasis. When acting as apelin receptor, activates both G(i) protein pathway that inhibits adenylate cyclase activity, and the beta-arrestin pathway that promotes internalization of the receptor. Also functions as mechanoreceptor that is activated by pathological stimuli in a G-protein-independent fashion to induce beta-arrestin signaling, hence eliciting cardiac hypertrophy. However, the presence of apelin ligand blunts cardiac hypertrophic induction from APLNR/APJ on response to pathological stimuli. Plays a key role in early development such as gastrulation, blood vessels formation and heart morphogenesis by acting as a receptor for apela hormone, promoting endoderm and mesendoderm cell migration and regulating the migration of cells fated to become myocardial progenitors, respectively. Promotes angioblast migration toward the embryonic midline, i.e. the position of the future vessel formation, during vasculogenesis. May promote sinus venosus (SV)-derived endothelial cells migration into the developing heart to promote coronary blood vessel development. Required for cardiovascular development, particularly for intersomitic vein angiogenesis by acting as a receptor for apln hormone. Also plays a role in various processes in adults such as regulation of blood vessel formation, blood pressure, heart contractility, and heart failure. Acts upstream of the i/o type of G-alpha proteins in the differentiation of endothelium, erythroid cells, myeloid cells and cardiomyocytes. The polypeptide is Apelin receptor A (aplnr-a) (Xenopus laevis (African clawed frog)).